A 242-amino-acid polypeptide reads, in one-letter code: Beta-carotene ketolase (242 aa).

It catalyses the reaction all-trans-beta-carotene + 2 AH2 + 2 O2 = echinenone + 2 A + 3 H2O. The enzyme catalyses echinenone + 2 AH2 + 2 O2 = canthaxanthin + 2 A + 3 H2O. It participates in carotenoid biosynthesis; astaxanthin biosynthesis. In terms of biological role, converts beta-carotene to canthaxanthin via echinenone. The sequence is that of Beta-carotene ketolase from Paracoccus sp. (strain PC1) (Alcaligenes sp. (strain PC1)).